The following is a 1061-amino-acid chain: Ceruloplasmin (1061 aa).

A signal peptide spans 1-19 (MKFLLLSTFIFLYSSLALA). 6 Plastocyanin-like domains span residues 20 to 199 (RDKH…LILC), 208 to 356 (KEKN…VRDC), 369 to 555 (HVRH…MKIC), 565 to 713 (RQKD…VNQC), 725 to 895 (GERT…LIVC), and 903 to 1057 (FSPK…VEQE). Y55, G64, and Y67 together coordinate Na(+). Cu(2+)-binding residues include H120 and H122. Residue H120 participates in O2 binding. Ca(2+) is bound at residue K128. N138 carries N-linked (GlcNAc...) asparagine glycosylation. The Ca(2+) site is built by Q143, D146, and D147. A disulfide bridge links C173 with C199. 2 residues coordinate Cu(2+): H179 and H181. An O2-binding site is contributed by H179. N-linked (GlcNAc...) asparagine glycosylation is present at N226. A Na(+)-binding site is contributed by S255. A disulfide bridge connects residues C275 and C356. H294, C337, and H342 together coordinate Cu(2+). N396 is a glycosylation site (N-linked (GlcNAc...) asparagine). Residues F407, G416, and Y419 each coordinate Na(+). Residues C529 and C555 are joined by a disulfide bond. N583 carries an N-linked (GlcNAc...) asparagine glycan. S612 provides a ligand contact to Na(+). A disulfide bond links C632 and C713. Cu(2+) is bound by residues H651, C694, H699, and M704. C694 (nucleophile; for glutathione peroxidase activity) is an active-site residue. Residue N757 is glycosylated (N-linked (GlcNAc...) asparagine). Positions 762, 771, and 774 each coordinate Na(+). Residues C869 and C895 are joined by a disulfide bond. Residue N921 is glycosylated (N-linked (GlcNAc...) asparagine). Na(+) is bound at residue S950. Cu(2+)-binding residues include H989, H992, H994, H1034, C1035, H1036, H1040, and M1045. The O2 site is built by H992 and H994. Residue H1036 coordinates O2.

It belongs to the multicopper oxidase family. In terms of assembly, found in a complex with MPO and LTF; interacts directly with MPO and LTF, which allows Fe(3+) incorporation into LTF, activation of CP ferroxidase activity and protection of CP antioxidant properties by MPO. It depends on Cu(2+) as a cofactor. In terms of tissue distribution, expressed in many tissues, including liver, eye and brain.

The protein localises to the secreted. The enzyme catalyses 4 Fe(2+) + O2 + 4 H(+) = 4 Fe(3+) + 2 H2O. It carries out the reaction 4 Cu(+) + O2 + 4 H(+) = 4 Cu(2+) + 2 H2O. The catalysed reaction is a hydroperoxide + 2 glutathione = an alcohol + glutathione disulfide + H2O. It catalyses the reaction 4 nitric oxide + O2 + 2 H2O = 4 nitrite + 4 H(+). The enzyme catalyses 2 glutathione + H2O2 = glutathione disulfide + 2 H2O. Its function is as follows. Multifunctional blue, copper-binding (6-7 atoms per molecule) glycoprotein. It has ferroxidase activity oxidizing Fe(2+) to Fe(3+) without releasing radical oxygen species. It is involved in iron transport across the cell membrane. Copper ions provide a large number of enzymatic activites. Oxidizes highly toxic ferrous ions to the ferric state for further incorporation onto apo-transferrins, catalyzes Cu(+) oxidation and promotes the oxidation of biogenic amines such as norepinephrin and serotonin. Provides Cu(2+) ions for the ascorbate-mediated deaminase degradation of the heparan sulfate chains of GPC1. Has glutathione peroxidase-like activity, can remove both hydrogen peroxide and lipid hydroperoxide in the presence of thiols. Also shows NO-oxidase and NO2 synthase activities that determine endocrine NO homeostasis. This Mus musculus (Mouse) protein is Ceruloplasmin (Cp).